Consider the following 927-residue polypeptide: DNA mismatch repair protein MutS (927 aa).

The tract at residues 44–80 (DESLKRPRNRHKPTSVPSIPLDSESQEQLETADNDND) is disordered. Residues 67 to 79 (ESQEQLETADNDN) show a composition bias toward acidic residues. 725–732 (GPNASGKS) is a binding site for ATP.

It belongs to the DNA mismatch repair MutS family.

This protein is involved in the repair of mismatches in DNA. It is possible that it carries out the mismatch recognition step. This protein has a weak ATPase activity. This Prochlorococcus marinus (strain MIT 9303) protein is DNA mismatch repair protein MutS.